We begin with the raw amino-acid sequence, 111 residues long: Nucleoid-associated protein Cphamn1_1179 (111 aa).

It belongs to the YbaB/EbfC family. In terms of assembly, homodimer.

Its subcellular location is the cytoplasm. It localises to the nucleoid. Binds to DNA and alters its conformation. May be involved in regulation of gene expression, nucleoid organization and DNA protection. This Chlorobium phaeobacteroides (strain BS1) protein is Nucleoid-associated protein Cphamn1_1179.